Consider the following 1074-residue polypeptide: DNA annealing helicase and endonuclease ZRANB3 (1074 aa).

Residues 46–208 enclose the Helicase ATP-binding domain; sequence TFALRRDGRC…FMQIEALFPQ (163 aa). A DNA annealing helicase activity region spans residues 46–481; sequence TFALRRDGRC…GRKEKLQAEE (436 aa). ATP is bound at residue 59-66; sequence DEMGLGKT. Residues 157–160 carry the DEAH box motif; the sequence is DESH. In terms of domain architecture, Helicase C-terminal spans 325–481; the sequence is AVKDYIKMML…GRKEKLQAEE (157 aa). The PIP-box motif lies at 519–526; the sequence is QRDIRSFF. At Ser566 the chain carries Phosphoserine. The RanBP2-type zinc-finger motif lies at 617–647; sequence FCGEGWQCAFCTYINNSVLPYCEMCENPRGG. The interval 659-719 is disordered; that stretch reads QNKNKNEKDD…RLTPQPGDEQ (61 aa). Composition is skewed to basic and acidic residues over residues 662-674 and 696-711; these read NKNE…DTSK and AKSK…EDRL. One can recognise an HNH domain in the interval 1006–1046; the sequence is PGEGHFWQVDHIKPVSGGGGQCSLDNLQTLCTVCHRERTAQ. The segment at 1006 to 1074 is endonuclease activity; it reads PGEGHFWQVD…SDITRFLVKK (69 aa). The APIM motif signature appears at 1069–1073; it reads RFLVK.

Belongs to the SNF2/RAD54 helicase family. Interacts (via PIP-box and RanBP2-type zinc finger) with PCNA (when PCNA is polyubiquitinated via 'Lys-63'-linked polyubiquitin).

The protein localises to the nucleus. It localises to the chromosome. Functionally, DNA annealing helicase and endonuclease required to maintain genome stability at stalled or collapsed replication forks by facilitating fork restart and limiting inappropriate recombination that could occur during template switching events. Recruited to the sites of stalled DNA replication by polyubiquitinated PCNA and acts as a structure-specific endonuclease that cleaves the replication fork D-loop intermediate, generating an accessible 3'-OH group in the template of the leading strand, which is amenable to extension by DNA polymerase. In addition to endonuclease activity, also catalyzes the fork regression via annealing helicase activity in order to prevent disintegration of the replication fork and the formation of double-strand breaks. The sequence is that of DNA annealing helicase and endonuclease ZRANB3 (ZRANB3) from Bos taurus (Bovine).